Reading from the N-terminus, the 253-residue chain is Indole-3-glycerol phosphate synthase (253 aa).

The protein belongs to the TrpC family.

It catalyses the reaction 1-(2-carboxyphenylamino)-1-deoxy-D-ribulose 5-phosphate + H(+) = (1S,2R)-1-C-(indol-3-yl)glycerol 3-phosphate + CO2 + H2O. It functions in the pathway amino-acid biosynthesis; L-tryptophan biosynthesis; L-tryptophan from chorismate: step 4/5. The protein is Indole-3-glycerol phosphate synthase of Bacillus cereus (strain ATCC 14579 / DSM 31 / CCUG 7414 / JCM 2152 / NBRC 15305 / NCIMB 9373 / NCTC 2599 / NRRL B-3711).